The sequence spans 439 residues: Secreted aspartic protease FUS4 (439 aa).

The first 22 residues, 1–22 (MLTIATLHVALQVFGAFSPSHA), serve as a signal peptide directing secretion. The Peptidase A1 domain occupies 49 to 434 (YLFNVTVGSP…NFEDRSFGLA (386 aa)). N52 and N61 each carry an N-linked (GlcNAc...) asparagine glycan. D67 is a catalytic residue. 3 N-linked (GlcNAc...) asparagine glycosylation sites follow: N101, N107, and N123. D296 is an active-site residue. C352 and C390 are oxidised to a cystine.

Belongs to the peptidase A1 family.

It is found in the secreted. Its function is as follows. Secreted aspartic protease; part of the gene cluster that mediates the biosynthesis of the mycotoxin fusarin C. Within the cluster, FUS1, FUS2, FUS8 and FUS9 are sufficient for fusarin production. The other FUS cluster members are not essential for fusarin C biosynthesis. The polypeptide is Secreted aspartic protease FUS4 (Gibberella moniliformis (strain M3125 / FGSC 7600) (Maize ear and stalk rot fungus)).